The primary structure comprises 1030 residues: uncharacterized protein (1030 aa).

Polar residues predominate over residues 1–15 (MSENSTDSKNFQFSE). Residues 1-53 (MSENSTDSKNFQFSEGSRESSNDELKVLLRDTETKEDEKSSFSNSEEESIIEN) are disordered. Positions 16 to 40 (GSRESSNDELKVLLRDTETKEDEKS) are enriched in basic and acidic residues. Ser-41 bears the Phosphoserine mark. The region spanning 134-290 (IKCVERMESV…WISEIHKQPC (157 aa)) is the Helicase ATP-binding domain. 147–154 (AHTSAGKT) lines the ATP pocket. A DEVH box motif is present at residues 238–241 (DEVH). Positions 357 to 561 (SLERIINMVL…GMILNLMRIE (205 aa)) constitute a Helicase C-terminal domain.

This sequence belongs to the helicase family. SKI2 subfamily.

It localises to the nucleus. This is an uncharacterized protein from Schizosaccharomyces pombe (strain 972 / ATCC 24843) (Fission yeast).